Here is a 41-residue protein sequence, read N- to C-terminus: Photosystem II reaction center protein L (41 aa).

The chain crosses the membrane as a helical span at residues 20 to 40 (SLYLGLLLVFVVGILFSSYFF).

This sequence belongs to the PsbL family. As to quaternary structure, PSII is composed of 1 copy each of membrane proteins PsbA, PsbB, PsbC, PsbD, PsbE, PsbF, PsbH, PsbI, PsbJ, PsbK, PsbL, PsbM, PsbT, PsbX, PsbY, PsbZ, Psb30/Ycf12, peripheral proteins PsbO, CyanoQ (PsbQ), PsbU, PsbV and a large number of cofactors. It forms dimeric complexes.

It is found in the cellular thylakoid membrane. In terms of biological role, one of the components of the core complex of photosystem II (PSII). PSII is a light-driven water:plastoquinone oxidoreductase that uses light energy to abstract electrons from H(2)O, generating O(2) and a proton gradient subsequently used for ATP formation. It consists of a core antenna complex that captures photons, and an electron transfer chain that converts photonic excitation into a charge separation. This subunit is found at the monomer-monomer interface and is required for correct PSII assembly and/or dimerization. This chain is Photosystem II reaction center protein L, found in Trichodesmium erythraeum (strain IMS101).